The following is a 417-amino-acid chain: Serpin A9 (417 aa).

A signal peptide spans 1-23 (MASYLYGVLFAVGLCAPIYCVSP). Residues Asn-101 and Asn-390 are each glycosylated (N-linked (GlcNAc...) asparagine).

This sequence belongs to the serpin family. Highly expressed in normal germinal center (GC) B-cells and GC B-cell-derived malignancies.

Its subcellular location is the secreted. It is found in the cytoplasm. The protein localises to the membrane. In terms of biological role, protease inhibitor that inhibits trypsin and trypsin-like serine proteases (in vitro). Inhibits plasmin and thrombin with lower efficiency (in vitro). The protein is Serpin A9 (SERPINA9) of Homo sapiens (Human).